Reading from the N-terminus, the 178-residue chain is MTTGLPSQTQVIELLGGEFARAGYEIEDVVIDAHARPPRITVIADGDDGLDLDAAATLSRSASALLDKLDTIEDHYVLEVSSPGVDRPLRTPKHFRRARGRKVDVVLSDNSTVTGRVGETGDDTVALVVRAGRDWAIREIPLGDVVKAVVQVEFSPPAQAELELAGVGGTDKTEERRK.

The protein belongs to the RimP family.

Its subcellular location is the cytoplasm. Its function is as follows. Required for maturation of 30S ribosomal subunits. This Mycobacterium avium (strain 104) protein is Ribosome maturation factor RimP.